The following is a 217-amino-acid chain: MALFGFGKKLTLPTPETALPGRRQAMPVPASHYVNGHPLKPPFPSGLETAMFGLGCFWGAERKFWQCEGVYTTAVGYAAGITPNPTYQEVCTGLTGHNEVVLVVFDPKIISYEELLKVFWESHNPTQGMRQGNDVGTQYRSGIYVYSPQHKKAAETSKEVYQKALNQAGYGDITTEILDAPEFYYAEDYHQQYLAKNPNGYCGLGGTNVSCPIGLNV.

Residue Cys56 is part of the active site.

The protein belongs to the MsrA Met sulfoxide reductase family.

The catalysed reaction is L-methionyl-[protein] + [thioredoxin]-disulfide + H2O = L-methionyl-(S)-S-oxide-[protein] + [thioredoxin]-dithiol. It catalyses the reaction [thioredoxin]-disulfide + L-methionine + H2O = L-methionine (S)-S-oxide + [thioredoxin]-dithiol. Its function is as follows. Has an important function as a repair enzyme for proteins that have been inactivated by oxidation. Catalyzes the reversible oxidation-reduction of methionine sulfoxide in proteins to methionine. The polypeptide is Peptide methionine sulfoxide reductase MsrA (Rippkaea orientalis (strain PCC 8801 / RF-1) (Cyanothece sp. (strain PCC 8801))).